We begin with the raw amino-acid sequence, 139 residues long: ATP synthase epsilon chain (139 aa).

A disordered region spans residues 89-110; the sequence is EARAEQARAEAEARRREAQSEH.

The protein belongs to the ATPase epsilon chain family. As to quaternary structure, F-type ATPases have 2 components, CF(1) - the catalytic core - and CF(0) - the membrane proton channel. CF(1) has five subunits: alpha(3), beta(3), gamma(1), delta(1), epsilon(1). CF(0) has three main subunits: a, b and c.

The protein resides in the cell membrane. Functionally, produces ATP from ADP in the presence of a proton gradient across the membrane. In Chloroflexus aggregans (strain MD-66 / DSM 9485), this protein is ATP synthase epsilon chain.